A 570-amino-acid chain; its full sequence is Protein HEATR9 (570 aa).

The chain is Protein HEATR9 (HEATR9) from Macaca fascicularis (Crab-eating macaque).